A 399-amino-acid polypeptide reads, in one-letter code: Beta sliding clamp (399 aa).

This sequence belongs to the beta sliding clamp family. Forms a ring-shaped head-to-tail homodimer around DNA which binds and tethers DNA polymerases and other proteins to the DNA. The DNA replisome complex has a single clamp-loading complex (3 tau and 1 each of delta, delta', psi and chi subunits) which binds 3 Pol III cores (1 core on the leading strand and 2 on the lagging strand) each with a beta sliding clamp dimer. Additional proteins in the replisome are other copies of gamma, psi and chi, Ssb, DNA helicase and RNA primase.

The protein resides in the cytoplasm. Confers DNA tethering and processivity to DNA polymerases and other proteins. Acts as a clamp, forming a ring around DNA (a reaction catalyzed by the clamp-loading complex) which diffuses in an ATP-independent manner freely and bidirectionally along dsDNA. Initially characterized for its ability to contact the catalytic subunit of DNA polymerase III (Pol III), a complex, multichain enzyme responsible for most of the replicative synthesis in bacteria; Pol III exhibits 3'-5' exonuclease proofreading activity. The beta chain is required for initiation of replication as well as for processivity of DNA replication. In Mycobacterium leprae (strain TN), this protein is Beta sliding clamp (dnaN).